The following is a 376-amino-acid chain: Glutamate 5-kinase (376 aa).

Position 15 (Lys15) interacts with ATP. Residues Ser55, Asp142, and Asn154 each contribute to the substrate site. ATP-binding positions include 174 to 175 and 216 to 222; these read TD and TGGMATK. The PUA domain occupies 281-359; sequence AGKVLVDAGA…AEIEQLLGYR (79 aa).

This sequence belongs to the glutamate 5-kinase family.

Its subcellular location is the cytoplasm. It carries out the reaction L-glutamate + ATP = L-glutamyl 5-phosphate + ADP. It participates in amino-acid biosynthesis; L-proline biosynthesis; L-glutamate 5-semialdehyde from L-glutamate: step 1/2. Catalyzes the transfer of a phosphate group to glutamate to form L-glutamate 5-phosphate. The chain is Glutamate 5-kinase from Trichlorobacter lovleyi (strain ATCC BAA-1151 / DSM 17278 / SZ) (Geobacter lovleyi).